Consider the following 125-residue polypeptide: Ribonuclease P protein component 1 (125 aa).

Positions 1–13 (MRRNGKEGKDRAP) are enriched in basic and acidic residues. A disordered region spans residues 1 to 24 (MRRNGKEGKDRAPGRPQRKGQEVA).

Belongs to the eukaryotic/archaeal RNase P protein component 1 family. As to quaternary structure, consists of a catalytic RNA component and at least 4-5 protein subunits.

The protein localises to the cytoplasm. The enzyme catalyses Endonucleolytic cleavage of RNA, removing 5'-extranucleotides from tRNA precursor.. Its function is as follows. Part of ribonuclease P, a protein complex that generates mature tRNA molecules by cleaving their 5'-ends. The sequence is that of Ribonuclease P protein component 1 from Thermococcus onnurineus (strain NA1).